The chain runs to 428 residues: Cholecystokinin receptor type A (428 aa).

Topologically, residues 1-41 (MEVADSLLGNGSDVPPPCELGLENETLVCLEQPRAAKEWQP) are extracellular. Asn10 and Asn24 each carry an N-linked (GlcNAc...) asparagine glycan. Cys18 and Cys29 are joined by a disulfide. Residues 42-67 (AVQILLYSLIFLLSVLGNTLVITVLI) traverse the membrane as a helical segment. Over 68 to 77 (RNKRMRTVTN) the chain is Cytoplasmic. The chain crosses the membrane as a helical span at residues 78 to 104 (IFLLSLAVSDLMLCLFCMPFNLIPNLL). Residues 105 to 115 (KDFIFGSAVCK) are Extracellular-facing. Cys114 and Cys196 are joined by a disulfide. The helical transmembrane segment at 116-137 (TTTYFMGTSVSVSTFNLVAISL) threads the bilayer. At 138–157 (ERYGAICKPLQSRVWQTKSH) the chain is on the cytoplasmic side. The chain crosses the membrane as a helical span at residues 158–178 (ALKVIATTWCLSFTIMTPYPI). The Extracellular portion of the chain corresponds to 179–210 (YSNLVPFTKTNNQTANMCRFLLPNDVMQQSWH). Asn190 is a glycosylation site (N-linked (GlcNAc...) asparagine). A helical membrane pass occupies residues 211 to 234 (TFLLLILFLIPGIVMMVAYGLISL). Over 235–313 (ELYQGIKFDA…NLMAKKRVIR (79 aa)) the chain is Cytoplasmic. The disordered stretch occupies residues 250-269 (ARDRNPSTGSSGRYEDGDGC). A helical transmembrane segment spans residues 314 to 334 (MLMVIVVLFFLCWMPIFSANA). At 335–349 (WRAYDTASAERRLSG) the chain is on the extracellular side. A helical transmembrane segment spans residues 350-373 (TPISFILLLSYTSSCVNPIIYCFM). Over 374 to 428 (NKRFRLGFLATFPCCPHPGPPGPRGEVGEEEEGRTTGASLSRYSYSHMSASAPGP) the chain is Cytoplasmic. The S-palmitoyl cysteine moiety is linked to residue Cys387. The segment at 393–428 (PPGPRGEVGEEEEGRTTGASLSRYSYSHMSASAPGP) is disordered. The span at 409–422 (TGASLSRYSYSHMS) shows a compositional bias: polar residues.

Belongs to the G-protein coupled receptor 1 family.

It is found in the cell membrane. In terms of biological role, receptor for cholecystokinin. Mediates pancreatic growth and enzyme secretion, smooth muscle contraction of the gall bladder and stomach. Has a 1000-fold higher affinity for CCK rather than for gastrin. It modulates feeding and dopamine-induced behavior in the central and peripheral nervous system. This receptor mediates its action by association with G proteins that activate a phosphatidylinositol-calcium second messenger system. This Canis lupus familiaris (Dog) protein is Cholecystokinin receptor type A (CCKAR).